Here is a 270-residue protein sequence, read N- to C-terminus: Bis(5'-nucleosyl)-tetraphosphatase, symmetrical (270 aa).

Belongs to the Ap4A hydrolase family.

The enzyme catalyses P(1),P(4)-bis(5'-adenosyl) tetraphosphate + H2O = 2 ADP + 2 H(+). Hydrolyzes diadenosine 5',5'''-P1,P4-tetraphosphate to yield ADP. The sequence is that of Bis(5'-nucleosyl)-tetraphosphatase, symmetrical from Cellvibrio japonicus (strain Ueda107) (Pseudomonas fluorescens subsp. cellulosa).